A 585-amino-acid chain; its full sequence is Nucleoporin p58/p45 (585 aa).

Repeat copies occupy residues Phe-7–Gly-8, Phe-30–Gly-31, Phe-42–Gly-43, Phe-61–Gly-62, and Phe-66–Gly-67. The tract at residues Phe-7–Gly-565 is 14 X 2 AA repeats of F-G. Residues Thr-194–Asn-232 form a disordered region. The segment covering Ser-211–Asn-232 has biased composition (basic and acidic residues). Coiled coils occupy residues Glu-242–Ser-262 and Glu-300–Thr-367. Position 317 is a phosphothreonine (Thr-317). 9 tandem repeats follow at residues Phe-474–Gly-475, Phe-478–Gly-479, Phe-499–Gly-500, Phe-505–Gly-506, Phe-515–Gly-516, Phe-517–Gly-518, Phe-531–Gly-532, Phe-554–Gly-555, and Phe-564–Gly-565. Positions Gly-563 to Arg-585 are disordered.

Belongs to the NUP58 family. In terms of assembly, component of the p62 complex, a complex composed of NUP62, NUP54, and isoform p58 and isoform p45 of NUP58. Isoform p58 interacts with NUTF2. Isoform p58 interacts with SRP1-alpha and Importin p97 proteins when they are together, but not with SRP1-alpha protein alone. Post-translationally, O-glycosylated. In terms of tissue distribution, expressed in liver.

It is found in the nucleus. Its subcellular location is the nuclear pore complex. The protein resides in the nucleus membrane. Its function is as follows. Component of the nuclear pore complex, a complex required for the trafficking across the nuclear membrane. This is Nucleoporin p58/p45 from Rattus norvegicus (Rat).